Reading from the N-terminus, the 178-residue chain is Interleukin-17B (178 aa).

The signal sequence occupies residues 1-22 (MDWPHSLLFLLAISIFLGPSQP). The segment at 21-44 (QPRNTKGKRKGQVRPGPLAPGPHQ) is disordered. An N-linked (GlcNAc...) asparagine glycan is attached at Asn-75. Intrachain disulfides connect Cys-121–Cys-176 and Cys-126–Cys-178.

The protein belongs to the IL-17 family.

It is found in the secreted. Functionally, stimulates the release of tumor necrosis factor alpha and IL-1-beta from the monocytic cell line THP-1. The chain is Interleukin-17B (IL17B) from Mesocricetus auratus (Golden hamster).